A 35-amino-acid polypeptide reads, in one-letter code: Flavodoxin (35 aa).

In terms of domain architecture, Flavodoxin-like spans 4-35 (IGLFYGTZTGKTESVAEIIDEFGDEVVTLDID).

It belongs to the flavodoxin family. The cofactor is FMN.

Its function is as follows. Low-potential electron donor to a number of redox enzymes. The polypeptide is Flavodoxin (Nostoc sp. (strain MAC)).